A 526-amino-acid polypeptide reads, in one-letter code: Exodeoxyribonuclease 7 large subunit (526 aa).

Residues 497 to 526 form a disordered region; that stretch reads AMTTEGGTPPAGAKKRSTKPAEPPKQGSLF.

This sequence belongs to the XseA family. As to quaternary structure, heterooligomer composed of large and small subunits.

It localises to the cytoplasm. It carries out the reaction Exonucleolytic cleavage in either 5'- to 3'- or 3'- to 5'-direction to yield nucleoside 5'-phosphates.. Functionally, bidirectionally degrades single-stranded DNA into large acid-insoluble oligonucleotides, which are then degraded further into small acid-soluble oligonucleotides. The polypeptide is Exodeoxyribonuclease 7 large subunit (Rhizobium johnstonii (strain DSM 114642 / LMG 32736 / 3841) (Rhizobium leguminosarum bv. viciae)).